A 181-amino-acid chain; its full sequence is ATP synthase subunit delta (181 aa).

Belongs to the ATPase delta chain family. In terms of assembly, F-type ATPases have 2 components, F(1) - the catalytic core - and F(0) - the membrane proton channel. F(1) has five subunits: alpha(3), beta(3), gamma(1), delta(1), epsilon(1). F(0) has three main subunits: a(1), b(2) and c(10-14). The alpha and beta chains form an alternating ring which encloses part of the gamma chain. F(1) is attached to F(0) by a central stalk formed by the gamma and epsilon chains, while a peripheral stalk is formed by the delta and b chains.

The protein resides in the cell membrane. In terms of biological role, f(1)F(0) ATP synthase produces ATP from ADP in the presence of a proton or sodium gradient. F-type ATPases consist of two structural domains, F(1) containing the extramembraneous catalytic core and F(0) containing the membrane proton channel, linked together by a central stalk and a peripheral stalk. During catalysis, ATP synthesis in the catalytic domain of F(1) is coupled via a rotary mechanism of the central stalk subunits to proton translocation. This protein is part of the stalk that links CF(0) to CF(1). It either transmits conformational changes from CF(0) to CF(1) or is implicated in proton conduction. The polypeptide is ATP synthase subunit delta (Lacticaseibacillus paracasei (strain ATCC 334 / BCRC 17002 / CCUG 31169 / CIP 107868 / KCTC 3260 / NRRL B-441) (Lactobacillus paracasei)).